A 341-amino-acid polypeptide reads, in one-letter code: Anthranilate phosphoribosyltransferase (341 aa).

5-phospho-alpha-D-ribose 1-diphosphate is bound by residues Gly82, 85-86, Thr90, 92-95, 110-118, and Thr122; these read GD, NIST, and KHGNRAITS. Gly82 lines the anthranilate pocket. Mg(2+) is bound at residue Ser94. Asn113 contacts anthranilate. Position 168 (Arg168) interacts with anthranilate. Mg(2+) is bound by residues Asp226 and Glu227.

The protein belongs to the anthranilate phosphoribosyltransferase family. Homodimer. Mg(2+) serves as cofactor.

The catalysed reaction is N-(5-phospho-beta-D-ribosyl)anthranilate + diphosphate = 5-phospho-alpha-D-ribose 1-diphosphate + anthranilate. Its pathway is amino-acid biosynthesis; L-tryptophan biosynthesis; L-tryptophan from chorismate: step 2/5. Catalyzes the transfer of the phosphoribosyl group of 5-phosphorylribose-1-pyrophosphate (PRPP) to anthranilate to yield N-(5'-phosphoribosyl)-anthranilate (PRA). The sequence is that of Anthranilate phosphoribosyltransferase from Caulobacter vibrioides (strain ATCC 19089 / CIP 103742 / CB 15) (Caulobacter crescentus).